Reading from the N-terminus, the 811-residue chain is Probable disease resistance protein At5g04720 (811 aa).

Residues 1–147 form the RPW8 domain; sequence MADIIGGEVV…KVDSLNEKLG (147 aa). NB-ARC domains are found at residues 180-242 and 312-437; these read VGLD…VSQS and TYDV…NVLV. 207-214 contacts ATP; it reads GMSGSGKT. LRR repeat units lie at residues 650–674, 676–699, 700–722, 724–746, and 748–769; these read FPKL…ICGI, SLNS…SKLK, ALQL…ICEL, RLKY…IGKV, and TLEK…VVLL.

It belongs to the disease resistance NB-LRR family.

Functionally, probable disease resistance protein. The polypeptide is Probable disease resistance protein At5g04720 (Arabidopsis thaliana (Mouse-ear cress)).